A 427-amino-acid chain; its full sequence is Histidinol dehydrogenase (427 aa).

Substrate is bound by residues Ser232, Gln254, and His257. Positions 254 and 257 each coordinate Zn(2+). Catalysis depends on proton acceptor residues Glu322 and His323. Substrate contacts are provided by His323, Asp356, Glu410, and His415. Asp356 is a binding site for Zn(2+). Residue His415 participates in Zn(2+) binding.

This sequence belongs to the histidinol dehydrogenase family. Requires Zn(2+) as cofactor.

The catalysed reaction is L-histidinol + 2 NAD(+) + H2O = L-histidine + 2 NADH + 3 H(+). It functions in the pathway amino-acid biosynthesis; L-histidine biosynthesis; L-histidine from 5-phospho-alpha-D-ribose 1-diphosphate: step 9/9. Catalyzes the sequential NAD-dependent oxidations of L-histidinol to L-histidinaldehyde and then to L-histidine. This chain is Histidinol dehydrogenase, found in Listeria monocytogenes serotype 4b (strain F2365).